A 472-amino-acid polypeptide reads, in one-letter code: Eukaryotic translation initiation factor 2 subunit 3 (472 aa).

A2 bears the N-acetylalanine mark. S16 carries the post-translational modification Phosphoserine. The 210-residue stretch at Q39 to R248 folds into the tr-type G domain. The G1 stretch occupies residues G48–S55. A51 to T56 provides a ligand contact to GTP. Residues N76 to K80 form a G2 region. Residues D134–G137 are G3. Residues N190 to D193 and S225 to Q227 each bind GTP. The interval N190 to D193 is G4. The G5 stretch occupies residues S225–Q227. The tract at residues G457–V469 is interacts with CDC123.

Belongs to the TRAFAC class translation factor GTPase superfamily. Classic translation factor GTPase family. EIF2G subfamily. Eukaryotic translation initiation factor 2 eIF2 is a heterotrimeric complex composed of an alpha (EIF2S1), a beta (EIF2S2) and a gamma (EIF2S3) chain. eIF2 is member of the 43S pre-initiation complex (43S PIC). Interacts (via C-terminus) with CDC123; the interaction is direct.

The protein resides in the cytoplasm. The protein localises to the cytosol. The enzyme catalyses GTP + H2O = GDP + phosphate + H(+). In terms of biological role, member of the eIF2 complex that functions in the early steps of protein synthesis by forming a ternary complex with GTP and initiator tRNA. This complex binds to a 40S ribosomal subunit, followed by mRNA binding to form the 43S pre-initiation complex (43S PIC). Junction of the 60S ribosomal subunit to form the 80S initiation complex is preceded by hydrolysis of the GTP bound to eIF2 and release of an eIF2-GDP binary complex. In order for eIF2 to recycle and catalyze another round of initiation, the GDP bound to eIF2 must exchange with GTP by way of a reaction catalyzed by eIF-2B. This is Eukaryotic translation initiation factor 2 subunit 3 (EIF2S3) from Bos taurus (Bovine).